The chain runs to 216 residues: Large ribosomal subunit protein uL3 (216 aa).

Residues 134–153 are disordered; the sequence is RATHGNSRSHNVPGSIGMAQ. An N5-methylglutamine modification is found at Gln153.

The protein belongs to the universal ribosomal protein uL3 family. In terms of assembly, part of the 50S ribosomal subunit. Forms a cluster with proteins L14 and L19. Methylated by PrmB.

In terms of biological role, one of the primary rRNA binding proteins, it binds directly near the 3'-end of the 23S rRNA, where it nucleates assembly of the 50S subunit. This is Large ribosomal subunit protein uL3 from Cupriavidus pinatubonensis (strain JMP 134 / LMG 1197) (Cupriavidus necator (strain JMP 134)).